Reading from the N-terminus, the 88-residue chain is DNA-directed RNA polymerase subunit omega (88 aa).

It belongs to the RNA polymerase subunit omega family. As to quaternary structure, the RNAP catalytic core consists of 2 alpha, 1 beta, 1 beta' and 1 omega subunit. When a sigma factor is associated with the core the holoenzyme is formed, which can initiate transcription.

It catalyses the reaction RNA(n) + a ribonucleoside 5'-triphosphate = RNA(n+1) + diphosphate. In terms of biological role, promotes RNA polymerase assembly. Latches the N- and C-terminal regions of the beta' subunit thereby facilitating its interaction with the beta and alpha subunits. The sequence is that of DNA-directed RNA polymerase subunit omega from Haemophilus influenzae (strain PittEE).